Here is a 474-residue protein sequence, read N- to C-terminus: Aspartate ammonia-lyase (474 aa).

Thr-105, Ser-144, Thr-145, Asn-146, and Thr-191 together coordinate L-aspartate. An SS loop region spans residues 322-331 (GSSIMPGKVN). Catalysis depends on Ser-323, which acts as the Proton acceptor. L-aspartate is bound by residues Ser-324 and Lys-329.

Belongs to the class-II fumarase/aspartase family. Aspartase subfamily. Homotetramer.

It catalyses the reaction L-aspartate = fumarate + NH4(+). The enzyme catalyses L-phenylalanine = (E)-cinnamate + NH4(+). Its activity is regulated as follows. Does not require any divalent metal ion for activation of catalysis, but the activity is slightly increased in the presence of Mg(2+), Mn(2+), Ca(2+) or Co(2+). Functionally, catalyzes the reversible conversion of L-aspartate to fumarate and ammonia. Can also utilize L-phenylalanine to form cinnamic acid. Exhibits the highest specific activity towards L-phenylalanine, but catalytic efficiency is 3-fold higher with L-aspartate. The protein is Aspartate ammonia-lyase of Pseudomonas aeruginosa (strain ATCC 15692 / DSM 22644 / CIP 104116 / JCM 14847 / LMG 12228 / 1C / PRS 101 / PAO1).